Reading from the N-terminus, the 151-residue chain is U1 small nuclear ribonucleoprotein C (151 aa).

The segment at 4 to 36 (FYCEYCSIYLTHSSPAGRKQHSQGRKHISAKVE) adopts a Matrin-type zinc-finger fold.

This sequence belongs to the U1 small nuclear ribonucleoprotein C family. In terms of assembly, U1 snRNP is composed of the 7 core Sm proteins B/B', D1, D2, D3, E, F and G that assemble in a heptameric protein ring on the Sm site of the small nuclear RNA to form the core snRNP, and at least 3 U1 snRNP-specific proteins U1-70K, U1-A and U1-C. U1-C interacts with U1 snRNA and the 5' splice-site region of the pre-mRNA.

The protein localises to the nucleus. Its function is as follows. Component of the spliceosomal U1 snRNP, which is essential for recognition of the pre-mRNA 5' splice-site and the subsequent assembly of the spliceosome. U1-C is directly involved in initial 5' splice-site recognition for both constitutive and regulated alternative splicing. The interaction with the 5' splice-site seems to precede base-pairing between the pre-mRNA and the U1 snRNA. Stimulates commitment or early (E) complex formation by stabilizing the base pairing of the 5' end of the U1 snRNA and the 5' splice-site region. This is U1 small nuclear ribonucleoprotein C from Theileria annulata.